A 218-amino-acid polypeptide reads, in one-letter code: GTP cyclohydrolase 1 (218 aa).

Residues Cys-109, His-112, and Cys-180 each coordinate Zn(2+).

This sequence belongs to the GTP cyclohydrolase I family. As to quaternary structure, toroid-shaped homodecamer, composed of two pentamers of five dimers.

The enzyme catalyses GTP + H2O = 7,8-dihydroneopterin 3'-triphosphate + formate + H(+). It participates in cofactor biosynthesis; 7,8-dihydroneopterin triphosphate biosynthesis; 7,8-dihydroneopterin triphosphate from GTP: step 1/1. The polypeptide is GTP cyclohydrolase 1 (Haemophilus ducreyi (strain 35000HP / ATCC 700724)).